The primary structure comprises 466 residues: Transcription factor SOX-10 (466 aa).

The segment at 1–67 is disordered; sequence MAEEQDLSEV…QQDGEADDDK (67 aa). Residues 23 to 32 show a composition bias toward low complexity; the sequence is LSPGSAPSLG. Residue Ser24 is modified to Phosphoserine. Residues 62-102 are dimerization (DIM); that stretch reads EADDDKFPVCIREAVSQVLSGYDWTLVPMPVRVNGASKSKP. A DNA-binding region (HMG box) is located at residues 104–172; sequence VKRPMNAFMV…QHKKDHPDYK (69 aa). A Nuclear export signal motif is present at residues 134–145; that stretch reads LSKTLGKLWRLL. 2 stretches are compositionally biased toward basic and acidic residues: residues 160-173 and 254-271; these read LRMQHKKDHPDYKY and ADPKRDGRSMGEGGKPHI. 4 disordered regions span residues 160–199, 212–274, 354–375, and 433–466; these read LRMQHKKDHPDYKYQPRRRKNGKAAQGEAECPGGEAEQGG, LDHR…IDFG, AQVKTETAGPQGPPHYTDQPST, and RPLYTAISDPSPSGPQSHSPTHWEQPVYTTLSRP. The interval 228–310 is transactivation domain (TAM); that stretch reads PEHPSGQSHG…LPPNGHPGHV (83 aa). The transactivation domain (TAC) stretch occupies residues 353-466; that stretch reads KAQVKTETAG…QPVYTTLSRP (114 aa). The span at 440-466 shows a compositional bias: polar residues; sequence SDPSPSGPQSHSPTHWEQPVYTTLSRP.

Monomer. Interacts with ARMCX3 at the mitochondrial outer membrane surface. Interacts with PAX3. Expressed in fetal brain and in adult brain, heart, small intestine and colon.

Its subcellular location is the cytoplasm. It localises to the nucleus. The protein resides in the mitochondrion outer membrane. Transcription factor that plays a central role in developing and mature glia. Specifically activates expression of myelin genes, during oligodendrocyte (OL) maturation, such as DUSP15 and MYRF, thereby playing a central role in oligodendrocyte maturation and CNS myelination. Once induced, MYRF cooperates with SOX10 to implement the myelination program. Transcriptional activator of MITF, acting synergistically with PAX3. Transcriptional activator of MBP, via binding to the gene promoter. The sequence is that of Transcription factor SOX-10 (SOX10) from Homo sapiens (Human).